A 239-amino-acid chain; its full sequence is U-scoloptoxin(11)-Sm3a (239 aa).

An N-terminal signal peptide occupies residues 1–16; that stretch reads MINFLLLVLILSVLES.

This sequence belongs to the scoloptoxin-11 family. Post-translationally, contains 9 disulfide bonds. In terms of tissue distribution, expressed by the venom gland.

The protein resides in the secreted. This chain is U-scoloptoxin(11)-Sm3a, found in Scolopendra morsitans (Tanzanian blue ringleg centipede).